The following is a 267-amino-acid chain: Hydroxyethylthiazole kinase 2 (267 aa).

M41 contacts substrate. ATP contacts are provided by K116 and T166. Substrate is bound at residue G193.

Belongs to the Thz kinase family. Requires Mg(2+) as cofactor.

It carries out the reaction 5-(2-hydroxyethyl)-4-methylthiazole + ATP = 4-methyl-5-(2-phosphooxyethyl)-thiazole + ADP + H(+). It participates in cofactor biosynthesis; thiamine diphosphate biosynthesis; 4-methyl-5-(2-phosphoethyl)-thiazole from 5-(2-hydroxyethyl)-4-methylthiazole: step 1/1. In terms of biological role, catalyzes the phosphorylation of the hydroxyl group of 4-methyl-5-beta-hydroxyethylthiazole (THZ). In Streptococcus pneumoniae (strain Taiwan19F-14), this protein is Hydroxyethylthiazole kinase 2.